A 344-amino-acid polypeptide reads, in one-letter code: HTH-type transcriptional regulator XC_2801 (344 aa).

Residues 3–60 form the HTH lysR-type domain; the sequence is HDLNDTLIFVKVVEQGSFIAAANSLGLPKTTVSRKVQELETRLGARLLHRTTRRIGLT. A DNA-binding region (H-T-H motif) is located at residues 20-39; it reads FIAAANSLGLPKTTVSRKVQ.

This sequence belongs to the LysR transcriptional regulatory family. In terms of assembly, interacts with the cyclic di-GMP effector XC_3703.

With respect to regulation, activity is regulated by cyclic di-GMP. Cyclic di-GMP specifically binds to XC_3703, which inhibits the interaction of the XC_2801-XC_3703 complex with DNA and prevents the transcription of the target genes. Its function is as follows. Transcriptional regulator that directly or indirectly regulates the expression of virulence-related genes, including flhB, aaeA, fliL and flgG. Binds to the promoter of the target genes only in the presence of XC_3703. The protein is HTH-type transcriptional regulator XC_2801 of Xanthomonas campestris pv. campestris (strain 8004).